The primary structure comprises 319 residues: Syntaxin ufe1 (319 aa).

At 1–297 the chain is on the cytoplasmic side; that stretch reads MTSRTNEFFG…IKAKSRSSRT (297 aa). One can recognise a t-SNARE coiled-coil homology domain in the interval 228 to 290; sequence LQEFEHTMER…SGGNQQLIKA (63 aa). The chain crosses the membrane as a helical; Anchor for type IV membrane protein span at residues 298–315; sequence ARLLFCIFTVMGLLLLSL. The Lumenal segment spans residues 316–319; the sequence is DRIV.

Belongs to the syntaxin family. In terms of assembly, component of a SNARE complex consisting of ufe1, use1, sec20 and sec22 or ykt6. Interacts with sad1.

The protein localises to the endoplasmic reticulum membrane. Functionally, syntaxin required for targeting and fusion of Golgi-derived retrograde transport vesicles with the ER. This is Syntaxin ufe1 (ufe1) from Schizosaccharomyces pombe (strain 972 / ATCC 24843) (Fission yeast).